An 857-amino-acid polypeptide reads, in one-letter code: Leucine--tRNA ligase (857 aa).

Residues 42 to 52 (PYPSGTLHMGH) carry the 'HIGH' region motif. The short motif at 616 to 620 (KMSKS) is the 'KMSKS' region element. K619 is a binding site for ATP.

This sequence belongs to the class-I aminoacyl-tRNA synthetase family.

It is found in the cytoplasm. The catalysed reaction is tRNA(Leu) + L-leucine + ATP = L-leucyl-tRNA(Leu) + AMP + diphosphate. The protein is Leucine--tRNA ligase of Parasynechococcus marenigrum (strain WH8102).